A 149-amino-acid chain; its full sequence is Large ribosomal subunit protein uL30 (149 aa).

The protein belongs to the universal ribosomal protein uL30 family. Part of the 50S ribosomal subunit.

The sequence is that of Large ribosomal subunit protein uL30 from Methanopyrus kandleri (strain AV19 / DSM 6324 / JCM 9639 / NBRC 100938).